We begin with the raw amino-acid sequence, 102 residues long: C-X-C motif chemokine 10 (102 aa).

Residues 1-19 (MNKSGFLIFCLILLTLSQG) form the signal peptide. Arg24 is modified (citrulline). Disulfide bonds link Cys28–Cys55 and Cys30–Cys72.

This sequence belongs to the intercrine alpha (chemokine CxC) family. Monomer, dimer, and tetramer. Interacts with CXCR3 (via N-terminus).

It localises to the secreted. In terms of biological role, pro-inflammatory cytokine that is involved in a wide variety of processes such as chemotaxis, differentiation, and activation of peripheral immune cells, regulation of cell growth, apoptosis and modulation of angiostatic effects. Plays thereby an important role during viral infections by stimulating the activation and migration of immune cells to the infected sites. Mechanistically, binding of CXCL10 to the CXCR3 receptor activates G protein-mediated signaling and results in downstream activation of phospholipase C-dependent pathway, an increase in intracellular calcium production and actin reorganization. In turn, recruitment of activated Th1 lymphocytes occurs at sites of inflammation. Activation of the CXCL10/CXCR3 axis also plays an important role in neurons in response to brain injury for activating microglia, the resident macrophage population of the central nervous system, and directing them to the lesion site. This recruitment is an essential element for neuronal reorganization. In Bos taurus (Bovine), this protein is C-X-C motif chemokine 10 (CXCL10).